A 202-amino-acid chain; its full sequence is Holliday junction branch migration complex subunit RuvA (202 aa).

A domain I region spans residues 1–62 (MIGYLRGRLH…EDAMELYGFT (62 aa)). The domain II stretch occupies residues 63-141 (RPEELHLFTL…KSGLVDGTET (79 aa)). The segment at 141-145 (TEAIP) is flexible linker. The domain III stretch occupies residues 146–202 (AGGGDNDEALAALLALGYSREEIGPILARVRQELGNAAPTTAVLQAVLKTFGRGGGD).

The protein belongs to the RuvA family. In terms of assembly, homotetramer. Forms an RuvA(8)-RuvB(12)-Holliday junction (HJ) complex. HJ DNA is sandwiched between 2 RuvA tetramers; dsDNA enters through RuvA and exits via RuvB. An RuvB hexamer assembles on each DNA strand where it exits the tetramer. Each RuvB hexamer is contacted by two RuvA subunits (via domain III) on 2 adjacent RuvB subunits; this complex drives branch migration. In the full resolvosome a probable DNA-RuvA(4)-RuvB(12)-RuvC(2) complex forms which resolves the HJ.

Its subcellular location is the cytoplasm. The RuvA-RuvB-RuvC complex processes Holliday junction (HJ) DNA during genetic recombination and DNA repair, while the RuvA-RuvB complex plays an important role in the rescue of blocked DNA replication forks via replication fork reversal (RFR). RuvA specifically binds to HJ cruciform DNA, conferring on it an open structure. The RuvB hexamer acts as an ATP-dependent pump, pulling dsDNA into and through the RuvAB complex. HJ branch migration allows RuvC to scan DNA until it finds its consensus sequence, where it cleaves and resolves the cruciform DNA. The polypeptide is Holliday junction branch migration complex subunit RuvA (Moorella thermoacetica (strain ATCC 39073 / JCM 9320)).